Consider the following 150-residue polypeptide: D-aminoacyl-tRNA deacylase (150 aa).

The Gly-cisPro motif, important for rejection of L-amino acids motif lies at 133–134 (GP).

It belongs to the DTD family. As to quaternary structure, homodimer.

It localises to the cytoplasm. The enzyme catalyses glycyl-tRNA(Ala) + H2O = tRNA(Ala) + glycine + H(+). It carries out the reaction a D-aminoacyl-tRNA + H2O = a tRNA + a D-alpha-amino acid + H(+). In terms of biological role, an aminoacyl-tRNA editing enzyme that deacylates mischarged D-aminoacyl-tRNAs. Also deacylates mischarged glycyl-tRNA(Ala), protecting cells against glycine mischarging by AlaRS. Acts via tRNA-based rather than protein-based catalysis; rejects L-amino acids rather than detecting D-amino acids in the active site. By recycling D-aminoacyl-tRNA to D-amino acids and free tRNA molecules, this enzyme counteracts the toxicity associated with the formation of D-aminoacyl-tRNA entities in vivo and helps enforce protein L-homochirality. The protein is D-aminoacyl-tRNA deacylase of Micrococcus luteus (strain ATCC 4698 / DSM 20030 / JCM 1464 / CCM 169 / CCUG 5858 / IAM 1056 / NBRC 3333 / NCIMB 9278 / NCTC 2665 / VKM Ac-2230) (Micrococcus lysodeikticus).